The sequence spans 501 residues: Phosphoethanolamine N-methyltransferase 1 (501 aa).

Positions 72, 77, 93, 118, 119, and 137 each coordinate S-adenosyl-L-homocysteine. The phosphocholine site is built by serine 170, threonine 175, glycine 176, arginine 180, and tyrosine 187. N-methylethanolamine phosphate-binding positions include 256–257 (QY) and tyrosine 265. Tyrosine 265 contacts phosphocholine. The S-adenosyl-L-homocysteine site is built by valine 274, serine 275, glycine 301, aspartate 323, aspartate 349, cysteine 350, and arginine 366. 5 residues coordinate phosphocholine: tyrosine 397, tyrosine 411, arginine 415, tyrosine 417, and lysine 483. Residues tyrosine 397, tyrosine 411, 415 to 417 (RGY), and lysine 483 contribute to the N-methylethanolamine phosphate site.

It belongs to the class I-like SAM-binding methyltransferase superfamily. PEAMT family.

The enzyme catalyses phosphoethanolamine + S-adenosyl-L-methionine = N-methylethanolamine phosphate + S-adenosyl-L-homocysteine + H(+). It carries out the reaction N-methylethanolamine phosphate + S-adenosyl-L-methionine = N,N-dimethylethanolamine phosphate + S-adenosyl-L-homocysteine + H(+). The catalysed reaction is N,N-dimethylethanolamine phosphate + S-adenosyl-L-methionine = phosphocholine + S-adenosyl-L-homocysteine + H(+). It participates in phospholipid metabolism; phosphatidylcholine biosynthesis; phosphocholine from phosphoethanolamine: step 1/1. Functionally, involved in phosphocholine biosynthesis. Catalyzes the N-methylation of phosphoethanolamine, phosphomonomethylethanolamine and phosphodimethylethanolamine, the three methylation steps required to convert phosphoethanolamine to phosphocholine (PC). May be involved in root development. The polypeptide is Phosphoethanolamine N-methyltransferase 1 (Zea mays (Maize)).